The chain runs to 382 residues: Succinyl-diaminopimelate desuccinylase (382 aa).

His-73 contributes to the Zn(2+) binding site. Asp-75 is an active-site residue. Asp-106 serves as a coordination point for Zn(2+). Glu-140 acts as the Proton acceptor in catalysis. Residues Glu-141, Glu-169, and His-355 each contribute to the Zn(2+) site.

Belongs to the peptidase M20A family. DapE subfamily. In terms of assembly, homodimer. It depends on Zn(2+) as a cofactor. Co(2+) is required as a cofactor.

It catalyses the reaction N-succinyl-(2S,6S)-2,6-diaminopimelate + H2O = (2S,6S)-2,6-diaminopimelate + succinate. The protein operates within amino-acid biosynthesis; L-lysine biosynthesis via DAP pathway; LL-2,6-diaminopimelate from (S)-tetrahydrodipicolinate (succinylase route): step 3/3. Its function is as follows. Catalyzes the hydrolysis of N-succinyl-L,L-diaminopimelic acid (SDAP), forming succinate and LL-2,6-diaminopimelate (DAP), an intermediate involved in the bacterial biosynthesis of lysine and meso-diaminopimelic acid, an essential component of bacterial cell walls. The protein is Succinyl-diaminopimelate desuccinylase of Saccharophagus degradans (strain 2-40 / ATCC 43961 / DSM 17024).